Consider the following 340-residue polypeptide: N-acetyl-gamma-glutamyl-phosphate reductase (340 aa).

Cysteine 146 is an active-site residue.

The protein belongs to the NAGSA dehydrogenase family. Type 1 subfamily.

It localises to the cytoplasm. The enzyme catalyses N-acetyl-L-glutamate 5-semialdehyde + phosphate + NADP(+) = N-acetyl-L-glutamyl 5-phosphate + NADPH + H(+). The protein operates within amino-acid biosynthesis; L-arginine biosynthesis; N(2)-acetyl-L-ornithine from L-glutamate: step 3/4. Catalyzes the NADPH-dependent reduction of N-acetyl-5-glutamyl phosphate to yield N-acetyl-L-glutamate 5-semialdehyde. This is N-acetyl-gamma-glutamyl-phosphate reductase from Streptococcus sanguinis (strain SK36).